Consider the following 82-residue polypeptide: DNA-directed RNA polymerase subunit Rpo5 (82 aa).

Belongs to the archaeal Rpo5/eukaryotic RPB5 RNA polymerase subunit family. Part of the RNA polymerase complex.

Its subcellular location is the cytoplasm. The enzyme catalyses RNA(n) + a ribonucleoside 5'-triphosphate = RNA(n+1) + diphosphate. Functionally, DNA-dependent RNA polymerase (RNAP) catalyzes the transcription of DNA into RNA using the four ribonucleoside triphosphates as substrates. This Thermococcus kodakarensis (strain ATCC BAA-918 / JCM 12380 / KOD1) (Pyrococcus kodakaraensis (strain KOD1)) protein is DNA-directed RNA polymerase subunit Rpo5.